We begin with the raw amino-acid sequence, 243 residues long: 1-(5-phosphoribosyl)-5-[(5-phosphoribosylamino)methylideneamino] imidazole-4-carboxamide isomerase (243 aa).

Aspartate 8 serves as the catalytic Proton acceptor. The Proton donor role is filled by aspartate 129.

The protein belongs to the HisA/HisF family.

It localises to the cytoplasm. The catalysed reaction is 1-(5-phospho-beta-D-ribosyl)-5-[(5-phospho-beta-D-ribosylamino)methylideneamino]imidazole-4-carboxamide = 5-[(5-phospho-1-deoxy-D-ribulos-1-ylimino)methylamino]-1-(5-phospho-beta-D-ribosyl)imidazole-4-carboxamide. Its pathway is amino-acid biosynthesis; L-histidine biosynthesis; L-histidine from 5-phospho-alpha-D-ribose 1-diphosphate: step 4/9. The chain is 1-(5-phosphoribosyl)-5-[(5-phosphoribosylamino)methylideneamino] imidazole-4-carboxamide isomerase from Syntrophotalea carbinolica (strain DSM 2380 / NBRC 103641 / GraBd1) (Pelobacter carbinolicus).